Reading from the N-terminus, the 293-residue chain is Acetyl-coenzyme A carboxylase carboxyl transferase subunit beta (293 aa).

In terms of domain architecture, CoA carboxyltransferase N-terminal spans 29–293; sequence LWSKCPECGL…GSKSLELTNA (265 aa). 4 residues coordinate Zn(2+): Cys-33, Cys-36, Cys-52, and Cys-55. A C4-type zinc finger spans residues 33–55; it reads CPECGLVVYLKDLRLNASVCAGC.

The protein belongs to the AccD/PCCB family. As to quaternary structure, acetyl-CoA carboxylase is a heterohexamer composed of biotin carboxyl carrier protein (AccB), biotin carboxylase (AccC) and two subunits each of ACCase subunit alpha (AccA) and ACCase subunit beta (AccD). Zn(2+) serves as cofactor.

It localises to the cytoplasm. It carries out the reaction N(6)-carboxybiotinyl-L-lysyl-[protein] + acetyl-CoA = N(6)-biotinyl-L-lysyl-[protein] + malonyl-CoA. The protein operates within lipid metabolism; malonyl-CoA biosynthesis; malonyl-CoA from acetyl-CoA: step 1/1. Functionally, component of the acetyl coenzyme A carboxylase (ACC) complex. Biotin carboxylase (BC) catalyzes the carboxylation of biotin on its carrier protein (BCCP) and then the CO(2) group is transferred by the transcarboxylase to acetyl-CoA to form malonyl-CoA. This Synechococcus sp. (strain CC9902) protein is Acetyl-coenzyme A carboxylase carboxyl transferase subunit beta.